The chain runs to 159 residues: MSKPGGHSRHGRRDGIDPVLRSRARRRALQAVYAWQISGGFAKQVIAQFAHEQAHEVADLAYFENLVEGVLSNRAELDTALTPYLDRSVEEVDAIERAVLRLAAYELLYRQDVPYRVVINEAIETAKRFGSEHGHTYVNGVLDRAAVEWRKVESGASGA.

This sequence belongs to the NusB family.

Involved in transcription antitermination. Required for transcription of ribosomal RNA (rRNA) genes. Binds specifically to the boxA antiterminator sequence of the ribosomal RNA (rrn) operons. The protein is Transcription antitermination protein NusB of Xanthomonas axonopodis pv. citri (strain 306).